We begin with the raw amino-acid sequence, 39 residues long: Photosystem II reaction center protein L (39 aa).

The chain crosses the membrane as a helical span at residues 18–38 (SLYLGLLIVFTTGILFSSYFF).

The protein belongs to the PsbL family. As to quaternary structure, PSII is composed of 1 copy each of membrane proteins PsbA, PsbB, PsbC, PsbD, PsbE, PsbF, PsbH, PsbI, PsbJ, PsbK, PsbL, PsbM, PsbT, PsbX, PsbY, PsbZ, Psb30/Ycf12, peripheral proteins PsbO, CyanoQ (PsbQ), PsbU, PsbV and a large number of cofactors. It forms dimeric complexes.

The protein localises to the cellular thylakoid membrane. Functionally, one of the components of the core complex of photosystem II (PSII). PSII is a light-driven water:plastoquinone oxidoreductase that uses light energy to abstract electrons from H(2)O, generating O(2) and a proton gradient subsequently used for ATP formation. It consists of a core antenna complex that captures photons, and an electron transfer chain that converts photonic excitation into a charge separation. This subunit is found at the monomer-monomer interface and is required for correct PSII assembly and/or dimerization. The polypeptide is Photosystem II reaction center protein L (Synechococcus sp. (strain CC9311)).